The chain runs to 60 residues: Protein CADMIUM TOLERANCE 4 (60 aa).

The chain crosses the membrane as a helical span at residues 26-42; that stretch reads GFLYACLFMLCCCFCCY.

Belongs to the CYSTM1 family. Mainly expressed in shoots, and, to a lower extent, in roots.

It is found in the cell membrane. The protein localises to the secreted. It localises to the cell wall. In terms of biological role, confers resistance to heavy metal ions (e.g. aluminium (Al)) by chelating them at the plasma membrane of root cells, thus stopping their entry and reducing their accumulation. In Oryza sativa subsp. japonica (Rice), this protein is Protein CADMIUM TOLERANCE 4.